A 101-amino-acid chain; its full sequence is NADH-quinone oxidoreductase subunit K (101 aa).

Helical transmembrane passes span 4 to 24 (LGHMLALGAVLFAISLAGIFL), 30 to 50 (IVLLMSIELMLLSVNINFVGF), and 62 to 82 (FVFFILTVAAAEAAIGLAILV).

This sequence belongs to the complex I subunit 4L family. In terms of assembly, NDH-1 is composed of 14 different subunits. Subunits NuoA, H, J, K, L, M, N constitute the membrane sector of the complex.

It is found in the cell inner membrane. The catalysed reaction is a quinone + NADH + 5 H(+)(in) = a quinol + NAD(+) + 4 H(+)(out). NDH-1 shuttles electrons from NADH, via FMN and iron-sulfur (Fe-S) centers, to quinones in the respiratory chain. The immediate electron acceptor for the enzyme in this species is believed to be ubiquinone. Couples the redox reaction to proton translocation (for every two electrons transferred, four hydrogen ions are translocated across the cytoplasmic membrane), and thus conserves the redox energy in a proton gradient. The protein is NADH-quinone oxidoreductase subunit K of Stenotrophomonas maltophilia (strain K279a).